The sequence spans 522 residues: Protein nucleotidyltransferase YdiU (522 aa).

Residues G109, G111, R112, K132, D144, G145, R195, and R202 each coordinate ATP. D271 acts as the Proton acceptor in catalysis. 2 residues coordinate Mg(2+): N272 and D281. D281 is an ATP binding site.

Belongs to the SELO family. Requires Mg(2+) as cofactor. It depends on Mn(2+) as a cofactor.

The enzyme catalyses L-seryl-[protein] + ATP = 3-O-(5'-adenylyl)-L-seryl-[protein] + diphosphate. The catalysed reaction is L-threonyl-[protein] + ATP = 3-O-(5'-adenylyl)-L-threonyl-[protein] + diphosphate. It catalyses the reaction L-tyrosyl-[protein] + ATP = O-(5'-adenylyl)-L-tyrosyl-[protein] + diphosphate. It carries out the reaction L-histidyl-[protein] + UTP = N(tele)-(5'-uridylyl)-L-histidyl-[protein] + diphosphate. The enzyme catalyses L-seryl-[protein] + UTP = O-(5'-uridylyl)-L-seryl-[protein] + diphosphate. The catalysed reaction is L-tyrosyl-[protein] + UTP = O-(5'-uridylyl)-L-tyrosyl-[protein] + diphosphate. Its function is as follows. Nucleotidyltransferase involved in the post-translational modification of proteins. It can catalyze the addition of adenosine monophosphate (AMP) or uridine monophosphate (UMP) to a protein, resulting in modifications known as AMPylation and UMPylation. The polypeptide is Protein nucleotidyltransferase YdiU (Burkholderia orbicola (strain MC0-3)).